A 97-amino-acid polypeptide reads, in one-letter code: uncharacterized protein (97 aa).

Positions 2 to 95 (IRHLVLFKLN…EFATWVIADY (94 aa)) constitute a Stress-response A/B barrel domain.

This is an uncharacterized protein from Streptomyces coelicolor (strain ATCC BAA-471 / A3(2) / M145).